The following is a 254-amino-acid chain: H-2 class II histocompatibility antigen, I-E alpha chain (254 aa).

The signal sequence occupies residues 1-24 (RSRALILGVLALTTMLSLCGGEDD). Residues 25–109 (IEADHVAFYG…KDSNFTPAAN (85 aa)) form an alpha-1 region. Residues 25–216 (IEADHVAFYG…IPAPMSELTE (192 aa)) lie on the Extracellular side of the membrane. 2 N-linked (GlcNAc...) asparagine glycosylation sites follow: Asn103 and Asn143. The interval 110–203 (EAPQATVFPK…GLEEPVLKHW (94 aa)) is alpha-2. One can recognise an Ig-like C1-type domain in the interval 112-204 (PQATVFPKSP…LEEPVLKHWE (93 aa)). A disulfide bridge links Cys132 with Cys188. The connecting peptide stretch occupies residues 204 to 216 (EPEIPAPMSELTE). A helical transmembrane segment spans residues 217–242 (TVVCALGLSVGLVGIVVGTIFIIQGL). Residues 243–254 (RSGGTSRHPGPL) lie on the Cytoplasmic side of the membrane.

This sequence belongs to the MHC class II family.

Its subcellular location is the membrane. The sequence is that of H-2 class II histocompatibility antigen, I-E alpha chain from Mus musculus (Mouse).